Reading from the N-terminus, the 1829-residue chain is DNA polymerase (1829 aa).

DOD-type homing endonuclease domains are found at residues 527–668 and 1136–1269; these read LSGI…SLGI and FLGY…SLGV.

It belongs to the DNA polymerase type-B family. In terms of processing, this protein undergoes a protein self splicing that involves a post-translational excision of the three intervening regions (inteins) followed by peptide ligation.

The catalysed reaction is DNA(n) + a 2'-deoxyribonucleoside 5'-triphosphate = DNA(n+1) + diphosphate. The protein is DNA polymerase (pol) of Thermococcus aggregans.